A 545-amino-acid polypeptide reads, in one-letter code: Esterase-5B (545 aa).

The signal sequence occupies residues 1 to 19 (MYCEKLILLLGCFWISSSA). Cys84 and Cys103 are disulfide-bonded. Residue Asn113 is glycosylated (N-linked (GlcNAc...) asparagine). Ser207 (acyl-ester intermediate) is an active-site residue. Cys259 and Cys271 are disulfide-bonded. The N-linked (GlcNAc...) asparagine glycan is linked to Asn421. The active-site Charge relay system is His467. Residue Asn507 is glycosylated (N-linked (GlcNAc...) asparagine). The cysteines at positions 515 and 536 are disulfide-linked.

It belongs to the type-B carboxylesterase/lipase family. As to quaternary structure, homodimer.

The protein localises to the secreted. The enzyme catalyses a carboxylic ester + H2O = an alcohol + a carboxylate + H(+). The sequence is that of Esterase-5B (Est-5B) from Drosophila miranda (Fruit fly).